A 265-amino-acid chain; its full sequence is Tryptophan 2,3-dioxygenase (265 aa).

Residues 38-42 and Arg104 contribute to the substrate site; that span reads FIVVH. His223 contacts heme. Thr237 is a binding site for substrate.

This sequence belongs to the tryptophan 2,3-dioxygenase family. In terms of assembly, homotetramer. The cofactor is heme.

It catalyses the reaction L-tryptophan + O2 = N-formyl-L-kynurenine. It functions in the pathway amino-acid degradation; L-tryptophan degradation via kynurenine pathway; L-kynurenine from L-tryptophan: step 1/2. Its function is as follows. Heme-dependent dioxygenase that catalyzes the oxidative cleavage of the L-tryptophan (L-Trp) pyrrole ring and converts L-tryptophan to N-formyl-L-kynurenine. Catalyzes the oxidative cleavage of the indole moiety. This Anaeromyxobacter sp. (strain K) protein is Tryptophan 2,3-dioxygenase.